We begin with the raw amino-acid sequence, 124 residues long: Small ribosomal subunit protein uS12 (124 aa).

Aspartate 89 is subject to 3-methylthioaspartic acid. Residues 102–124 (LDTSGVNNRKHGRSKYGTKRPKS) form a disordered region. Positions 109-124 (NRKHGRSKYGTKRPKS) are enriched in basic residues.

Belongs to the universal ribosomal protein uS12 family. In terms of assembly, part of the 30S ribosomal subunit. Contacts proteins S8 and S17. May interact with IF1 in the 30S initiation complex.

With S4 and S5 plays an important role in translational accuracy. In terms of biological role, interacts with and stabilizes bases of the 16S rRNA that are involved in tRNA selection in the A site and with the mRNA backbone. Located at the interface of the 30S and 50S subunits, it traverses the body of the 30S subunit contacting proteins on the other side and probably holding the rRNA structure together. The combined cluster of proteins S8, S12 and S17 appears to hold together the shoulder and platform of the 30S subunit. The chain is Small ribosomal subunit protein uS12 from Francisella tularensis subsp. tularensis (strain FSC 198).